Here is a 365-residue protein sequence, read N- to C-terminus: uncharacterized protein (365 aa).

3 helical membrane-spanning segments follow: residues 105-125, 151-171, and 187-207; these read TGNW…QCWL, ILTT…SLTI, and IFLI…SLIF.

It localises to the cell membrane. This is an uncharacterized protein from Mycoplasma genitalium (strain ATCC 33530 / DSM 19775 / NCTC 10195 / G37) (Mycoplasmoides genitalium).